The primary structure comprises 275 residues: Pyrroline-5-carboxylate reductase (275 aa).

It belongs to the pyrroline-5-carboxylate reductase family.

It is found in the cytoplasm. It catalyses the reaction L-proline + NADP(+) = (S)-1-pyrroline-5-carboxylate + NADPH + 2 H(+). The enzyme catalyses L-proline + NAD(+) = (S)-1-pyrroline-5-carboxylate + NADH + 2 H(+). Its pathway is amino-acid biosynthesis; L-proline biosynthesis; L-proline from L-glutamate 5-semialdehyde: step 1/1. In terms of biological role, catalyzes the reduction of 1-pyrroline-5-carboxylate (PCA) to L-proline. This Pasteurella multocida (strain Pm70) protein is Pyrroline-5-carboxylate reductase.